We begin with the raw amino-acid sequence, 244 residues long: Phosphoadenosine 5'-phosphosulfate reductase (244 aa).

C239 serves as the catalytic Nucleophile; cysteine thiosulfonate intermediate.

This sequence belongs to the PAPS reductase family. CysH subfamily.

The protein resides in the cytoplasm. It carries out the reaction [thioredoxin]-disulfide + sulfite + adenosine 3',5'-bisphosphate + 2 H(+) = [thioredoxin]-dithiol + 3'-phosphoadenylyl sulfate. It functions in the pathway sulfur metabolism; hydrogen sulfide biosynthesis; sulfite from sulfate: step 3/3. Functionally, catalyzes the formation of sulfite from phosphoadenosine 5'-phosphosulfate (PAPS) using thioredoxin as an electron donor. The polypeptide is Phosphoadenosine 5'-phosphosulfate reductase (Escherichia coli O8 (strain IAI1)).